The primary structure comprises 313 residues: E3 ubiquitin-protein ligase SINA-like 2 (313 aa).

The segment at 1 to 26 is disordered; the sequence is MSGEASTSRRKRQRVPSSVESVENGG. The RING-type zinc finger occupies 44–80; that stretch reads CPICCHALTSPIFQCDNGHIACSSCCTKLRNKCPSCA. Positions 94-277 are SBD; the sequence is VVEAVMVTCP…LKMEICIRKL (184 aa). The SIAH-type zinc finger occupies 97 to 155; the sequence is AVMVTCPNVKHGCTEKFSYGKELIHEKDCRFALCYCPAPNCNYSGVYKDLYSHFYVNHY. Residues Cys102, Cys109, His121, Cys125, Cys132, Cys137, His149, and His154 each contribute to the Zn(2+) site. Positions 278–313 are disordered; that stretch reads KKDEEEADEDEESEEEEDDDDDDDDDDEEEDADEEE. Over residues 282 to 313 the composition is skewed to acidic residues; sequence EEADEDEESEEEEDDDDDDDDDDEEEDADEEE.

This sequence belongs to the SINA (Seven in absentia) family.

It carries out the reaction S-ubiquitinyl-[E2 ubiquitin-conjugating enzyme]-L-cysteine + [acceptor protein]-L-lysine = [E2 ubiquitin-conjugating enzyme]-L-cysteine + N(6)-ubiquitinyl-[acceptor protein]-L-lysine.. The protein operates within protein modification; protein ubiquitination. In terms of biological role, E3 ubiquitin-protein ligase that mediates ubiquitination and subsequent proteasomal degradation of target proteins. E3 ubiquitin ligases accept ubiquitin from an E2 ubiquitin-conjugating enzyme in the form of a thioester and then directly transfers the ubiquitin to targeted substrates. It probably triggers the ubiquitin-mediated degradation of different substrates. This Arabidopsis thaliana (Mouse-ear cress) protein is E3 ubiquitin-protein ligase SINA-like 2.